The chain runs to 461 residues: Cysteine--tRNA ligase (461 aa).

Cys29 contacts Zn(2+). The 'HIGH' region signature appears at 31 to 41 (MTVYDFCHIGH). Residues Cys210, His235, and Glu239 each coordinate Zn(2+). The 'KMSKS' region motif lies at 267–271 (KMSKS). Lys270 contacts ATP.

The protein belongs to the class-I aminoacyl-tRNA synthetase family. In terms of assembly, monomer. Requires Zn(2+) as cofactor.

The protein resides in the cytoplasm. The catalysed reaction is tRNA(Cys) + L-cysteine + ATP = L-cysteinyl-tRNA(Cys) + AMP + diphosphate. The polypeptide is Cysteine--tRNA ligase (Azotobacter vinelandii (strain DJ / ATCC BAA-1303)).